The chain runs to 241 residues: MRTATITEFSSSYRSLPGLLHLLQFGDSALPIGGFSFSNGLESAIQQNLVHDKETLREFTLTAMNQAATSDRIALLTAHRAARADDRGALQVIDKAVFERKLNEETRLMTVRMGRKLCELSASIIDDRLNRDWLECIKTAETPGTHPVSLGLAFAALDVDGRDAFGAQQYGVATTILGAALRLMRVSFMDTQKILLEATSTVAPAYEEIADAGIEDMASFAPMVDILAAVHVKGHVRMFMN.

The protein belongs to the UreF family. As to quaternary structure, ureD, UreF and UreG form a complex that acts as a GTP-hydrolysis-dependent molecular chaperone, activating the urease apoprotein by helping to assemble the nickel containing metallocenter of UreC. The UreE protein probably delivers the nickel.

It is found in the cytoplasm. Its function is as follows. Required for maturation of urease via the functional incorporation of the urease nickel metallocenter. This is Urease accessory protein UreF 1 from Brucella melitensis biotype 1 (strain ATCC 23456 / CCUG 17765 / NCTC 10094 / 16M).